The primary structure comprises 656 residues: RNA-binding protein EWS (656 aa).

The interval 1 to 285 is EAD (Gln/Pro/Thr-rich); it reads MASTDYSTYS…GVYGQESGGF (285 aa). 31 tandem repeats follow at residues 8–16, 17–27, 28–34, 35–42, 43–50, 51–59, 60–68, 69–75, 76–84, 85–91, 92–110, 111–116, 117–125, 126–156, 157–163, 164–170, 171–177, 178–188, 189–193, 194–201, 202–206, 207–212, 213–218, 219–224, 225–230, 231–238, 239–245, 246–252, 253–259, 260–276, and 277–285. Positions 8-285 are 31 X approximate tandem repeats; it reads TYSQAAAQQG…GVYGQESGGF (278 aa). The segment covering 123-137 has biased composition (low complexity); it reads AYPAYGQQPAATAPT. Residues 123–360 form a disordered region; it reads AYPAYGQQPA…PVDPDEDSDN (238 aa). Over residues 143-172 the composition is skewed to polar residues; it reads NKPTETSQPQSSTGGYNQPSLGYGQSNYSY. Over residues 192–266 the composition is skewed to low complexity; the sequence is PTSYSSTQPT…QSSSYGQQSS (75 aa). The IQ domain maps to 256-285; the sequence is QQSSSYGQQSSFRQDHPSSMGVYGQESGGF. Phosphoserine; by PKC is present on Ser-266. An asymmetric dimethylarginine mark is found at Arg-300, Arg-302, Arg-304, Arg-309, Arg-314, Arg-317, and Arg-321. A compositionally biased stretch (gly residues) spans 308-335; the sequence is DRGGMSRGGRGGGRGGMGSAGERGGFNK. Low complexity predominate over residues 336-350; it reads PGGPMDEGPDLDLGP. Positions 361-447 constitute an RRM domain; it reads SAIYVQGLND…SKLKVSLARK (87 aa). Lys-439 bears the N6-acetyllysine mark. Disordered regions lie at residues 448–525 and 547–656; these read KPPM…WQCP and KPEG…DRPY. 2 positions are modified to asymmetric dimethylarginine: Arg-455 and Arg-464. At Arg-471 the chain carries Asymmetric dimethylarginine; alternate. Arg-471 carries the omega-N-methylarginine; alternate modification. Residues 472-490 are compositionally biased toward gly residues; that stretch reads GGPGGPGGPGGPMGRMGGR. Arg-486 is subject to Omega-N-methylarginine. Arg-490 carries the post-translational modification Asymmetric dimethylarginine; by PRMT8. 3 positions are modified to asymmetric dimethylarginine: Arg-494, Arg-500, and Arg-503. Arg-506 bears the Asymmetric dimethylarginine; alternate mark. Omega-N-methylarginine; alternate is present on Arg-506. The RanBP2-type zinc-finger motif lies at 518–549; it reads RAGDWQCPNPGCGNQNFAWRTECNQCKAPKPE. Residues 551 to 560 are compositionally biased toward pro residues; it reads FLPPPFPPPG. Residues Arg-563 and Arg-565 each carry the asymmetric dimethylarginine modification. Gly residues predominate over residues 566-591; the sequence is GGPGGMRGGRGGLMDRGGPGGMFRGG. Position 572 is an asymmetric dimethylarginine; alternate; by PRMT8 (Arg-572). Arg-572 is modified (omega-N-methylarginine; alternate; by PRMT8). Asymmetric dimethylarginine occurs at positions 575, 581, 589, and 592. The span at 592–606 shows a compositional bias: basic and acidic residues; the sequence is RGGDRGGFRGGRGMD. At Arg-596 the chain carries Asymmetric dimethylarginine; alternate; by PRMT8. Residue Arg-596 is modified to Omega-N-methylarginine; alternate; by PRMT8. Residue Arg-600 is modified to Asymmetric dimethylarginine. Asymmetric dimethylarginine; by PRMT8 is present on Arg-603. At Arg-607 the chain carries Asymmetric dimethylarginine; alternate; by PRMT8. Arg-607 is subject to Omega-N-methylarginine; alternate; by PRMT8. Positions 607–618 are enriched in gly residues; that stretch reads RGGFGGGRRGGP. Position 615 is an asymmetric dimethylarginine; alternate (Arg-615). Arg-615 bears the Omega-N-methylarginine; alternate mark. Asymmetric dimethylarginine occurs at positions 633 and 636. The Nuclear localization signal motif lies at 639-656; the sequence is PGKMDKGEHRQERRDRPY. The segment covering 641 to 656 has biased composition (basic and acidic residues); sequence KMDKGEHRQERRDRPY.

It belongs to the RRM TET family. As to quaternary structure, binds POLR2C, SF1, calmodulin and RNA. Interacts with PTK2B/FAK2 and TDRD3. Binds calmodulin in the presence, but not in the absence, of calcium ion. Forms a complex with REC8, PRDM9, SYCP3 and SYCP1; complex formation is dependent of phosphorylated form of REC8 and requires PRDM9 bound to hotspot DNA; EWSR1 joins PRDM9 with the chromosomal axis through REC8. Post-translationally, phosphorylated; calmodulin-binding inhibits phosphorylation of Ser-266. In terms of processing, highly methylated on arginine residues. Methylation is mediated by PRMT1 and, at lower level by PRMT8. Ubiquitous.

The protein resides in the nucleus. It localises to the cytoplasm. It is found in the cell membrane. Functionally, binds to ssRNA containing the consensus sequence 5'-AGGUAA-3'. Might normally function as a transcriptional repressor. EWS-fusion-proteins (EFPS) may play a role in the tumorigenic process. They may disturb gene expression by mimicking, or interfering with the normal function of CTD-POLII within the transcription initiation complex. They may also contribute to an aberrant activation of the fusion protein target genes. The protein is RNA-binding protein EWS (EWSR1) of Homo sapiens (Human).